Here is a 511-residue protein sequence, read N- to C-terminus: Maturase K (511 aa).

Belongs to the intron maturase 2 family. MatK subfamily.

The protein resides in the plastid. It localises to the chloroplast. Usually encoded in the trnK tRNA gene intron. Probably assists in splicing its own and other chloroplast group II introns. This chain is Maturase K, found in Oryza nivara (Indian wild rice).